Here is a 690-residue protein sequence, read N- to C-terminus: Cysteine-rich receptor-like protein kinase 21 (690 aa).

The first 24 residues, 1–24 (MQKNKMVDLRAIFWFVVISSCAVA), serve as a signal peptide directing secretion. The region spanning 25–129 (APTCIQRSDF…CLVRYSNHLI (105 aa)) is the Gnk2-homologous 1 domain. The Extracellular segment spans residues 25–281 (APTCIQRSDF…KDGKNISTGS (257 aa)). N-linked (GlcNAc...) asparagine glycans are attached at residues Asn130, Asn148, Asn155, Asn220, Asn268, and Asn276. The region spanning 140–246 (AEYIEYKYNT…CFMRWDLQPF (107 aa)) is the Gnk2-homologous 2 domain. A helical transmembrane segment spans residues 282–302 (IVAIAVVSVVVSTVLLALGYA). The Cytoplasmic portion of the chain corresponds to 303–690 (VSRRRKAYQS…DASITSVRPR (388 aa)). One can recognise a Protein kinase domain in the interval 363–640 (FHKSNKLGHG…IFRMLTNVSI (278 aa)). ATP contacts are provided by residues 369-377 (LGHGGFGAV) and Lys391. A Phosphotyrosine modification is found at Tyr436. The Proton acceptor role is filled by Asp488. At Ser492 the chain carries Phosphoserine. Position 528 is a phosphothreonine (Thr528). Position 536 is a phosphotyrosine (Tyr536).

This sequence belongs to the protein kinase superfamily. Ser/Thr protein kinase family. CRK subfamily.

It is found in the membrane. It carries out the reaction L-seryl-[protein] + ATP = O-phospho-L-seryl-[protein] + ADP + H(+). It catalyses the reaction L-threonyl-[protein] + ATP = O-phospho-L-threonyl-[protein] + ADP + H(+). This is Cysteine-rich receptor-like protein kinase 21 (CRK21) from Arabidopsis thaliana (Mouse-ear cress).